Reading from the N-terminus, the 220-residue chain is Small ribosomal subunit protein eS1 (220 aa).

Belongs to the eukaryotic ribosomal protein eS1 family.

This chain is Small ribosomal subunit protein eS1, found in Methanococcus vannielii (strain ATCC 35089 / DSM 1224 / JCM 13029 / OCM 148 / SB).